Reading from the N-terminus, the 366-residue chain is MKRRDVGSLFAGARVAESVPLAPLTTLRVGPVARTLVTCDTTDQVVGVLRELDDRARNGDCGPVLVFAGGSNVVIGDALADLTVVRVANDRVTVDGNLVRAEAGTVWDEVVVATIERGLGGLECLSGIPGSAGATPVQNVGAYGVEVSDVITRVRLLDRSTGDVSWVPAADLSFGYRTSVLKQAEGLALPAVVLEVEFALDASGRSAPLRYGELTAALGMNSGERGEPRAVRDAVLALRTRKGMVLDAADHDTWSVGSFFTNPVVAPEIYERLAAQTGESVPHYPAPDGVKLAAGWLLERAGFGKGYPGDPHARCRLSSKHALALTNRGGATAADVMVLARTVRDGVRDVFGITLKPEPVLVGCAL.

The 175-residue stretch at 29–203 folds into the FAD-binding PCMH-type domain; that stretch reads VGPVARTLVT…LEVEFALDAS (175 aa). The active site involves R177. S258 acts as the Proton donor in catalysis. E358 is an active-site residue.

Belongs to the MurB family. FAD is required as a cofactor.

The protein localises to the cytoplasm. The catalysed reaction is UDP-N-acetyl-alpha-D-muramate + NADP(+) = UDP-N-acetyl-3-O-(1-carboxyvinyl)-alpha-D-glucosamine + NADPH + H(+). The protein operates within cell wall biogenesis; peptidoglycan biosynthesis. Its function is as follows. Cell wall formation. The chain is UDP-N-acetylenolpyruvoylglucosamine reductase from Mycobacterium ulcerans (strain Agy99).